Reading from the N-terminus, the 445-residue chain is Zinc finger protein 296 (445 aa).

Basic residues predominate over residues 1–10 (MSRRKAGRVP). A disordered region spans residues 1–20 (MSRRKAGRVPRRVDPDTDTD). Lys31 participates in a covalent cross-link: Glycyl lysine isopeptide (Lys-Gly) (interchain with G-Cter in SUMO2). Positions 62 to 88 (SRPLGAPSTCAPRMPLSSKSSDRQPWT) are disordered. 3 consecutive C2H2-type zinc fingers follow at residues 138-161 (LSCL…QWDH), 212-234 (PTCD…MRSH), and 240-262 (YSCD…KKTH). The disordered stretch occupies residues 256 to 359 (NRHKKTHRQL…TAPRKSHGPG (104 aa)). The span at 269 to 278 (SPSTSASSRG) shows a compositional bias: polar residues. Positions 320–332 (PGSGAQGGPGFVG) are enriched in gly residues. The segment covering 338-351 (KVERTDPVKIEKTA) has biased composition (basic and acidic residues). C2H2-type zinc fingers lie at residues 360–382 (GKCE…RRSH), 388–410 (YTCD…RRTH), and 418–441 (VKCP…RQKH).

This sequence belongs to the krueppel C2H2-type zinc-finger protein family. As to quaternary structure, interacts with KLF4. In terms of tissue distribution, strongly expressed in testis and embryonic stem cells.

It localises to the nucleus. In terms of biological role, may be a transcriptional corepressor with KLF4. In Mus musculus (Mouse), this protein is Zinc finger protein 296.